A 304-amino-acid polypeptide reads, in one-letter code: Putative ankyrin repeat protein R602 (304 aa).

ANK repeat units lie at residues 82-117 (LIRY…DITF), 118-146 (NDNF…DVHA), 147-176 (DNEF…DPFC), 178-206 (DNIV…DINA), 207-236 (GNNY…SIND), and 238-266 (SPND…DIST).

In Acanthamoeba polyphaga (Amoeba), this protein is Putative ankyrin repeat protein R602.